We begin with the raw amino-acid sequence, 137 residues long: Acidic phospholipase A2 beta-bungarotoxin A6 chain (137 aa).

The N-terminal stretch at 1–9 (AVCVSLLGA) is a signal peptide. Positions 10–17 (ANIPPQHL) are excised as a propeptide. Disulfide bonds link Cys-44–Cys-136, Cys-46–Cys-62, Cys-61–Cys-117, Cys-68–Cys-110, Cys-78–Cys-103, and Cys-96–Cys-108. Ca(2+) is bound by residues Tyr-45, Gly-47, and Gly-49. The active site involves His-65. Asp-66 contributes to the Ca(2+) binding site. Asp-111 is a catalytic residue.

It belongs to the phospholipase A2 family. Group I subfamily. D49 sub-subfamily. In terms of assembly, heterodimer; disulfide-linked. The A chains have phospholipase A2 activity and the B chains show homology with the basic protease inhibitors. Requires Ca(2+) as cofactor. As to expression, expressed by the venom gland.

Its subcellular location is the secreted. The enzyme catalyses a 1,2-diacyl-sn-glycero-3-phosphocholine + H2O = a 1-acyl-sn-glycero-3-phosphocholine + a fatty acid + H(+). Its function is as follows. Snake venom phospholipase A2 (PLA2) that inhibits neuromuscular transmission by blocking acetylcholine release from the nerve termini. PLA2 catalyzes the calcium-dependent hydrolysis of the 2-acyl groups in 3-sn-phosphoglycerides. The sequence is that of Acidic phospholipase A2 beta-bungarotoxin A6 chain from Bungarus multicinctus (Many-banded krait).